We begin with the raw amino-acid sequence, 411 residues long: Peptidase T (411 aa).

His-79 is a Zn(2+) binding site. Residue Asp-81 is part of the active site. Asp-142 is a binding site for Zn(2+). The active-site Proton acceptor is the Glu-176. Zn(2+) contacts are provided by Glu-177, Asp-199, and His-381.

The protein belongs to the peptidase M20B family. Requires Zn(2+) as cofactor.

It is found in the cytoplasm. It carries out the reaction Release of the N-terminal residue from a tripeptide.. In terms of biological role, cleaves the N-terminal amino acid of tripeptides. This is Peptidase T from Exiguobacterium sibiricum (strain DSM 17290 / CCUG 55495 / CIP 109462 / JCM 13490 / 255-15).